Here is a 76-residue protein sequence, read N- to C-terminus: Esculentin-2-ALa (76 aa).

A signal peptide spans 1–22 (MFTLKKSMLLLFFLGTISLSLC). A propeptide spanning residues 23 to 39 (EEERNADEDDGEKEVKR) is cleaved from the precursor. A disulfide bridge connects residues Cys-70 and Cys-76.

In terms of tissue distribution, expressed by the skin glands.

It localises to the secreted. Its function is as follows. Antimicrobial peptide with activity against Gram-positive and Gram-negative bacteria and against fungi. Has been tested against S.aureus (MIC=2.5 ug/mL), B.pumilus (MIC=2.5 ug/mL), B.cereus (MIC=7.5 ug/mL), E.coli (MIC=12.5 ug/mL), B.dysenteriae (MIC=7.5 ug/mL), A.cacoaceticus (MIC=25.0 ug/mL), P.aeruginosa (MIC=50.0 ug/mL) and C.albicans (MIC=2.5 ug/mL). Also shows a weak hemolytic activity. This is Esculentin-2-ALa from Amolops loloensis (Lolokou Sucker Frog).